Consider the following 417-residue polypeptide: UDP-N-acetylglucosamine 1-carboxyvinyltransferase (417 aa).

Residue 22 to 23 coordinates phosphoenolpyruvate; sequence KN. R93 is a UDP-N-acetyl-alpha-D-glucosamine binding site. Residue C117 is the Proton donor of the active site. A 2-(S-cysteinyl)pyruvic acid O-phosphothioketal modification is found at C117. UDP-N-acetyl-alpha-D-glucosamine-binding positions include 122 to 126, D304, and I326; that span reads RPVDQ.

It belongs to the EPSP synthase family. MurA subfamily.

Its subcellular location is the cytoplasm. The catalysed reaction is phosphoenolpyruvate + UDP-N-acetyl-alpha-D-glucosamine = UDP-N-acetyl-3-O-(1-carboxyvinyl)-alpha-D-glucosamine + phosphate. It participates in cell wall biogenesis; peptidoglycan biosynthesis. Functionally, cell wall formation. Adds enolpyruvyl to UDP-N-acetylglucosamine. This is UDP-N-acetylglucosamine 1-carboxyvinyltransferase from Neisseria meningitidis serogroup A / serotype 4A (strain DSM 15465 / Z2491).